Reading from the N-terminus, the 238-residue chain is Ciliary microtubule associated protein 1B (238 aa).

An STPGR repeat occupies 182 to 207; it reads PGPCAYHVVNPMIYKTRAPQFTMLGR. Positions 206-238 are disordered; that stretch reads GRTLPPRENTKKPGPASYSVDKVVWSRGSRGRG.

It belongs to the CIMAP family.

Its subcellular location is the cell projection. It is found in the cilium. The protein resides in the flagellum. The protein is Ciliary microtubule associated protein 1B (Cimap1b) of Mus musculus (Mouse).